The primary structure comprises 433 residues: Glutamate--tRNA ligase 1 (433 aa).

The 'HIGH' region signature appears at 7 to 17 (PSPTGLIHLGN). Residues 230–234 (KMSKR) carry the 'KMSKS' region motif. Lys-233 serves as a coordination point for ATP.

Belongs to the class-I aminoacyl-tRNA synthetase family. Glutamate--tRNA ligase type 1 subfamily. As to quaternary structure, monomer.

It is found in the cytoplasm. The enzyme catalyses tRNA(Glu) + L-glutamate + ATP = L-glutamyl-tRNA(Glu) + AMP + diphosphate. Functionally, catalyzes the attachment of glutamate to tRNA(Glu) in a two-step reaction: glutamate is first activated by ATP to form Glu-AMP and then transferred to the acceptor end of tRNA(Glu). The chain is Glutamate--tRNA ligase 1 from Neorickettsia sennetsu (strain ATCC VR-367 / Miyayama) (Ehrlichia sennetsu).